The primary structure comprises 496 residues: MPAMNLKYKFGLVNSAGRYLTAEKFGGKVNASGATLKARQVWILEQEESSTISYLKAPSGNFLSADKNGNVYCSVEDRTEDADTGFEIELQPDGKWALKNVSHQRYLACNGEELICSESSTSNPSANWTVQLAIHPQVCMKNVQHQRYAHLKTSEEGEDSVVVDELVPWGADSTLTLVYLGKGKYGLEAFNGKFVQTDGQLAGTANEQTQFTLIFTSGHLVLRDNNGRHLGVDSGTRVLKSSKPGLTKANYFILEDSCPQGAFEFGGKYASLKQGEDVSFKLLVDEDIEDTETFQLEFVETDKYAIRVCDPKKNSRDAKFWKTVAAGIQANGNSKDQTDCQFSVEYNGNDMHVRAPGGKYVSVRDNGHLFLQDSPKDFIFRLLNRPKLVLKCPHGFVGMKEGKAEVACNRSNFDVFTVTYKEGGYTIQDSCGKYWSCDDSSRIVLGEAAGTFFFEFHELSKFAIRAESNGMLIKGEQSGLFTANGSEVSKDTLWEF.

This sequence belongs to the fascin family.

Its subcellular location is the cytoplasm. It localises to the cytoskeleton. Its function is as follows. Acts as an actin bundling protein. This Strongylocentrotus purpuratus (Purple sea urchin) protein is Fascin.